The chain runs to 122 residues: Large ribosomal subunit protein bL12 (122 aa).

It belongs to the bacterial ribosomal protein bL12 family. In terms of assembly, homodimer. Part of the ribosomal stalk of the 50S ribosomal subunit. Forms a multimeric L10(L12)X complex, where L10 forms an elongated spine to which 2 to 4 L12 dimers bind in a sequential fashion. Binds GTP-bound translation factors.

Its function is as follows. Forms part of the ribosomal stalk which helps the ribosome interact with GTP-bound translation factors. Is thus essential for accurate translation. The sequence is that of Large ribosomal subunit protein bL12 from Buchnera aphidicola subsp. Cinara cedri (strain Cc).